Consider the following 302-residue polypeptide: Sulfate adenylyltransferase subunit 2 (302 aa).

The protein belongs to the PAPS reductase family. CysD subfamily. In terms of assembly, heterodimer composed of CysD, the smaller subunit, and CysN.

The enzyme catalyses sulfate + ATP + H(+) = adenosine 5'-phosphosulfate + diphosphate. It participates in sulfur metabolism; hydrogen sulfide biosynthesis; sulfite from sulfate: step 1/3. In terms of biological role, with CysN forms the ATP sulfurylase (ATPS) that catalyzes the adenylation of sulfate producing adenosine 5'-phosphosulfate (APS) and diphosphate, the first enzymatic step in sulfur assimilation pathway. APS synthesis involves the formation of a high-energy phosphoric-sulfuric acid anhydride bond driven by GTP hydrolysis by CysN coupled to ATP hydrolysis by CysD. The polypeptide is Sulfate adenylyltransferase subunit 2 (Buchnera aphidicola subsp. Acyrthosiphon pisum (strain 5A)).